The primary structure comprises 383 residues: MTATLALTEDLIRRRSVTPADEGCQAVLETRLKALGFTCEAIVSGPDDFRVTNLWAVKRGTQGTDGKLLAFAGHTDVVPTGPLEQWNSDPFEPTHRDGRLYGRGAADMKTSIAGFVVAVEEFVKAHPAHAGSIAFLITSDEEGPAHDGTIKVVEALKARGERLDYCVIGEPTSVDTLGDMVKNGRRGSLSGKLVVKGVQCHIAYPHLGRNPIHEAAPALAELAAEVWDQGNEYFPPTSWQMSNIHGGTGATNVIPGHVTIDFNFRFSTASTPEGLKSRVHAILDKHKLEYTLDWTLGGEPFLTPRGDLSDALSAAIEAETGVKTELSTTGGTSDGRFIAKICPQVIEFGPPNATIHKIDENVEVRFIDPLKNVYRGVLERLIA.

A Zn(2+)-binding site is contributed by H74. The active site involves D76. A Zn(2+)-binding site is contributed by D107. E141 (proton acceptor) is an active-site residue. Residues E142, E170, and H356 each coordinate Zn(2+).

The protein belongs to the peptidase M20A family. DapE subfamily. As to quaternary structure, homodimer. Requires Zn(2+) as cofactor. Co(2+) is required as a cofactor.

It carries out the reaction N-succinyl-(2S,6S)-2,6-diaminopimelate + H2O = (2S,6S)-2,6-diaminopimelate + succinate. It participates in amino-acid biosynthesis; L-lysine biosynthesis via DAP pathway; LL-2,6-diaminopimelate from (S)-tetrahydrodipicolinate (succinylase route): step 3/3. Its function is as follows. Catalyzes the hydrolysis of N-succinyl-L,L-diaminopimelic acid (SDAP), forming succinate and LL-2,6-diaminopimelate (DAP), an intermediate involved in the bacterial biosynthesis of lysine and meso-diaminopimelic acid, an essential component of bacterial cell walls. The sequence is that of Succinyl-diaminopimelate desuccinylase from Cupriavidus pinatubonensis (strain JMP 134 / LMG 1197) (Cupriavidus necator (strain JMP 134)).